The primary structure comprises 269 residues: Chymotrypsin-like elastase family member 2B (269 aa).

The signal sequence occupies residues M1–S16. The propeptide at C17–R28 is activation peptide. Residues M29–A267 enclose the Peptidase S1 domain. C58 and C74 are disulfide-bonded. Residues H73 and D121 each act as charge relay system in the active site. Cystine bridges form between C155–C222, C186–C202, and C212–C243. S216 (charge relay system) is an active-site residue.

It belongs to the peptidase S1 family. Elastase subfamily. Pancreas.

It is found in the secreted. It carries out the reaction Preferential cleavage: Leu-|-Xaa, Met-|-Xaa and Phe-|-Xaa. Hydrolyzes elastin.. In terms of biological role, acts upon elastin. This chain is Chymotrypsin-like elastase family member 2B (CELA2B), found in Homo sapiens (Human).